A 726-amino-acid chain; its full sequence is DNA-directed RNA polymerase subunit beta N-terminal section (726 aa).

It belongs to the RNA polymerase beta chain family. In plastids the minimal PEP RNA polymerase catalytic core is composed of four subunits: alpha, beta, beta', and beta''. When a (nuclear-encoded) sigma factor is associated with the core the holoenzyme is formed, which can initiate transcription.

It localises to the plastid. The protein localises to the chloroplast. It carries out the reaction RNA(n) + a ribonucleoside 5'-triphosphate = RNA(n+1) + diphosphate. Functionally, DNA-dependent RNA polymerase catalyzes the transcription of DNA into RNA using the four ribonucleoside triphosphates as substrates. The chain is DNA-directed RNA polymerase subunit beta N-terminal section (rpoB1) from Tetradesmus obliquus (Green alga).